We begin with the raw amino-acid sequence, 135 residues long: Small ribosomal subunit protein uS12 (135 aa).

D89 carries the post-translational modification 3-methylthioaspartic acid. Residues 106–135 are disordered; it reads GVKDRKQGRSKYGAKRPKPGQAPAAAGKKK. The segment covering 113–123 has biased composition (basic residues); it reads GRSKYGAKRPK. Positions 124 to 135 are enriched in low complexity; sequence PGQAPAAAGKKK.

This sequence belongs to the universal ribosomal protein uS12 family. As to quaternary structure, part of the 30S ribosomal subunit. Contacts proteins S8 and S17. May interact with IF1 in the 30S initiation complex.

Functionally, with S4 and S5 plays an important role in translational accuracy. Interacts with and stabilizes bases of the 16S rRNA that are involved in tRNA selection in the A site and with the mRNA backbone. Located at the interface of the 30S and 50S subunits, it traverses the body of the 30S subunit contacting proteins on the other side and probably holding the rRNA structure together. The combined cluster of proteins S8, S12 and S17 appears to hold together the shoulder and platform of the 30S subunit. This Synechococcus sp. (strain JA-3-3Ab) (Cyanobacteria bacterium Yellowstone A-Prime) protein is Small ribosomal subunit protein uS12.